The sequence spans 96 residues: Transcription and mRNA export factor SUS1 (96 aa).

Residue Lys-68 forms a Glycyl lysine isopeptide (Lys-Gly) (interchain with G-Cter in ubiquitin) linkage.

Belongs to the ENY2 family. Component of the nuclear pore complex (NPC)-associated TREX-2 complex (transcription and export complex 2), composed of at least SUS1, SAC3, THP1, SEM1, and CDC31. TREX-2 contains 2 SUS1 chains. The TREX-2 complex interacts with the nucleoporin NUP1. Component of the 1.8 MDa SAGA transcription coactivator-HAT complex. SAGA is built of 5 distinct domains with specialized functions. Within the SAGA complex, SUS1, SGF11, SGF73 and UBP8 form an additional subcomplex of SAGA called the DUB module (deubiquitination module). Interacts directly with THP1, SAC3, SGF11, and with the RNA polymerase II.

The protein resides in the nucleus. The protein localises to the nucleoplasm. Its subcellular location is the cytoplasm. It is found in the P-body. Functionally, involved in mRNA export coupled transcription activation by association with both the TREX-2 and the SAGA complexes. At the promoters, SAGA is required for recruitment of the basal transcription machinery. It influences RNA polymerase II transcriptional activity through different activities such as TBP interaction and promoter selectivity, interaction with transcription activators, and chromatin modification through histone acetylation and deubiquitination. Within the SAGA complex, participates in a subcomplex required for deubiquitination of H2B and for the maintenance of steady-state H3 methylation levels. The TREX-2 complex functions in docking export-competent ribonucleoprotein particles (mRNPs) to the nuclear entrance of the nuclear pore complex (nuclear basket). TREX-2 participates in mRNA export and accurate chromatin positioning in the nucleus by tethering genes to the nuclear periphery. May also be involved in cytoplasmic mRNA decay by interaction with components of P-bodies. The polypeptide is Transcription and mRNA export factor SUS1 (Saccharomyces cerevisiae (strain YJM789) (Baker's yeast)).